We begin with the raw amino-acid sequence, 883 residues long: Phosphoenolpyruvate carboxylase (883 aa).

Active-site residues include His138 and Lys546.

This sequence belongs to the PEPCase type 1 family. It depends on Mg(2+) as a cofactor.

It catalyses the reaction oxaloacetate + phosphate = phosphoenolpyruvate + hydrogencarbonate. In terms of biological role, forms oxaloacetate, a four-carbon dicarboxylic acid source for the tricarboxylic acid cycle. The chain is Phosphoenolpyruvate carboxylase from Shigella dysenteriae serotype 1 (strain Sd197).